A 470-amino-acid polypeptide reads, in one-letter code: Uronate isomerase (470 aa).

It belongs to the metallo-dependent hydrolases superfamily. Uronate isomerase family.

The catalysed reaction is D-glucuronate = D-fructuronate. The enzyme catalyses aldehydo-D-galacturonate = keto-D-tagaturonate. Its pathway is carbohydrate metabolism; pentose and glucuronate interconversion. This chain is Uronate isomerase, found in Escherichia coli O8 (strain IAI1).